Here is a 202-residue protein sequence, read N- to C-terminus: FMN-dependent NADH:quinone oxidoreductase (202 aa).

FMN is bound by residues serine 9 and 95–98; that span reads MYNF.

Belongs to the azoreductase type 1 family. In terms of assembly, homodimer. It depends on FMN as a cofactor.

It carries out the reaction 2 a quinone + NADH + H(+) = 2 a 1,4-benzosemiquinone + NAD(+). The catalysed reaction is N,N-dimethyl-1,4-phenylenediamine + anthranilate + 2 NAD(+) = 2-(4-dimethylaminophenyl)diazenylbenzoate + 2 NADH + 2 H(+). Its function is as follows. Quinone reductase that provides resistance to thiol-specific stress caused by electrophilic quinones. Also exhibits azoreductase activity. Catalyzes the reductive cleavage of the azo bond in aromatic azo compounds to the corresponding amines. This Chromobacterium violaceum (strain ATCC 12472 / DSM 30191 / JCM 1249 / CCUG 213 / NBRC 12614 / NCIMB 9131 / NCTC 9757 / MK) protein is FMN-dependent NADH:quinone oxidoreductase.